A 502-amino-acid chain; its full sequence is MEETNIRVVLYSIFSLIFLIISFKFLKPKKQNLPPSPPGWLPIIGHLRLLKPPIHRTLRSFSETLDHNDGGGVMSLRLGSRLVYVVSSHKVAAEECFGKNDVVLANRPQVIIGKHVGYNNTNMIAAPYGDHWRNLRRLCTIEIFSTHRLNCFLYVRTDEVRRLISRLSRLAGTKKTVVELKPMLMDLTFNNIMRMMTGKRYYGEETTDEEEAKRVRKLVADVGANTSSGNAVDYVPILRLFSSYENRVKKLGEETDKFLQGLIDDKRGQQETGTTMIDHLLVLQKSDIEYYTDQIIKGIILIMVIAGTNTSAVTLEWALSNLLNHPDVISKARDEIDNRVGLDRLIEEADLSELPYLKNIVLETLRLHPATPLLVPHMASEDCKIGSYDMPRGTTLLVNAWAIHRDPNTWDDPDSFKPERFEKEEEAQKLLAFGLGRRACPGSGLAQRIVGLALGSLIQCFEWERVGNVEVDMKEGVGNTVPKAIPLKAICKARPFLHKIIS.

A helical transmembrane segment spans residues 6–26 (IRVVLYSIFSLIFLIISFKFL). A heme-binding site is contributed by C440.

It belongs to the cytochrome P450 family. Heme serves as cofactor.

Its subcellular location is the membrane. In Arabidopsis thaliana (Mouse-ear cress), this protein is Cytochrome P450 81D1 (CYP81D1).